The sequence spans 254 residues: Caffeoyl-CoA O-methyltransferase (254 aa).

Positions 1 to 25 (MATTNVEENKQTQEQQPKEIKHQEV) are disordered. The span at 7–25 (EENKQTQEQQPKEIKHQEV) shows a compositional bias: basic and acidic residues. Lys28 is a binding site for substrate. S-adenosyl-L-methionine-binding positions include Thr70, Glu92, 94–95 (GV), Ser100, Asp118, and Ala147. A substrate-binding site is contributed by Asp170. Asp170 serves as a coordination point for a divalent metal cation. Residue Asp172 coordinates S-adenosyl-L-methionine. A divalent metal cation-binding residues include Asp196 and Asn197. Asn201 is a binding site for substrate.

It belongs to the class I-like SAM-binding methyltransferase superfamily. Cation-dependent O-methyltransferase family. CCoAMT subfamily. Requires a divalent metal cation as cofactor.

The catalysed reaction is (E)-caffeoyl-CoA + S-adenosyl-L-methionine = (E)-feruloyl-CoA + S-adenosyl-L-homocysteine + H(+). It functions in the pathway aromatic compound metabolism; phenylpropanoid biosynthesis. In terms of biological role, methylates caffeoyl-CoA to feruloyl-CoA and 5-hydroxyferuloyl-CoA to sinapoyl-CoA. Plays a role in the synthesis of feruloylated polysaccharides. Involved in the reinforcement of the plant cell wall. Also involved in the responding to wounding or pathogen challenge by the increased formation of cell wall-bound ferulic acid polymers. This Mesembryanthemum crystallinum (Common ice plant) protein is Caffeoyl-CoA O-methyltransferase.